The following is a 177-amino-acid chain: ATP synthase subunit delta (177 aa).

Belongs to the ATPase delta chain family. In terms of assembly, F-type ATPases have 2 components, F(1) - the catalytic core - and F(0) - the membrane proton channel. F(1) has five subunits: alpha(3), beta(3), gamma(1), delta(1), epsilon(1). F(0) has three main subunits: a(1), b(2) and c(10-14). The alpha and beta chains form an alternating ring which encloses part of the gamma chain. F(1) is attached to F(0) by a central stalk formed by the gamma and epsilon chains, while a peripheral stalk is formed by the delta and b chains.

Its subcellular location is the cell inner membrane. F(1)F(0) ATP synthase produces ATP from ADP in the presence of a proton or sodium gradient. F-type ATPases consist of two structural domains, F(1) containing the extramembraneous catalytic core and F(0) containing the membrane proton channel, linked together by a central stalk and a peripheral stalk. During catalysis, ATP synthesis in the catalytic domain of F(1) is coupled via a rotary mechanism of the central stalk subunits to proton translocation. Its function is as follows. This protein is part of the stalk that links CF(0) to CF(1). It either transmits conformational changes from CF(0) to CF(1) or is implicated in proton conduction. This is ATP synthase subunit delta from Vibrio alginolyticus.